The sequence spans 309 residues: Serine/threonine-protein phosphatase 2A catalytic subunit beta isoform (309 aa).

4 residues coordinate Mn(2+): aspartate 57, histidine 59, aspartate 85, and asparagine 117. Histidine 118 (proton donor) is an active-site residue. Mn(2+)-binding residues include histidine 167 and histidine 241. Position 307 is a phosphotyrosine (tyrosine 307). The residue at position 309 (leucine 309) is a Leucine methyl ester.

It belongs to the PPP phosphatase family. PP-1 subfamily. As to quaternary structure, found in a complex with at least ARL2, PPP2CB, PPP2R1A, PPP2R2A, PPP2R5E and TBCD. Interacts with TBCD. PP2A consists of a common heterodimeric core enzyme (composed of a 36 kDa catalytic subunit (subunit C) and a 65 kDa constant regulatory subunit (PR65) (subunit A)) that associates with a variety of regulatory subunits. Proteins that associate with the core dimer include three families of regulatory subunits B (the R2/B/PR55/B55, R3/B''/PR72/PR130/PR59 and R5/B'/B56 families), the 48 kDa variable regulatory subunit, viral proteins, and cell signaling molecules. Binds PPME1. May indirectly interact with SGO1, most probably through regulatory B56 subunits. Interacts with CTTNBP2NL. Interacts with PTPA. Part of the core of STRIPAK complexes composed of PP2A catalytic and scaffolding subunits, the striatins (PP2A regulatory subunits), the striatin-associated proteins MOB4, STRIP1 and STRIP2, PDCD10 and members of the STE20 kinases, such as STK24 and STK26. It depends on Mn(2+) as a cofactor. In terms of processing, reversibly methyl esterified on Leu-309 by leucine carboxyl methyltransferase 1 (Lcmt1) and protein phosphatase methylesterase 1 (PPME1). Carboxyl methylation influences the affinity of the catalytic subunit for the different regulatory subunits, thereby modulating the PP2A holoenzyme's substrate specificity, enzyme activity and cellular localization. Phosphorylation of either threonine (by autophosphorylation-activated protein kinase) or tyrosine results in inactivation of the phosphatase. Auto-dephosphorylation has been suggested as a mechanism for reactivation. Post-translationally, may be monoubiquitinated by NOSIP.

It is found in the cytoplasm. Its subcellular location is the nucleus. The protein resides in the chromosome. The protein localises to the centromere. It localises to the cytoskeleton. It is found in the spindle pole. It catalyses the reaction O-phospho-L-seryl-[protein] + H2O = L-seryl-[protein] + phosphate. The catalysed reaction is O-phospho-L-threonyl-[protein] + H2O = L-threonyl-[protein] + phosphate. Its function is as follows. Catalytic subunit of protein phosphatase 2A (PP2A), a serine/threonine phosphatase involved in the regulation of a wide variety of enzymes, signal transduction pathways, and cellular events. PP2A can modulate the activity of phosphorylase B kinase, casein kinase 2, mitogen-stimulated S6 kinase, and MAP-2 kinase. Part of the striatin-interacting phosphatase and kinase (STRIPAK) complexes. STRIPAK complexes have critical roles in protein (de)phosphorylation and are regulators of multiple signaling pathways including Hippo, MAPK, nuclear receptor and cytoskeleton remodeling. Different types of STRIPAK complexes are involved in a variety of biological processes such as cell growth, differentiation, apoptosis, metabolism and immune regulation. This is Serine/threonine-protein phosphatase 2A catalytic subunit beta isoform (PPP2CB) from Oryctolagus cuniculus (Rabbit).